We begin with the raw amino-acid sequence, 516 residues long: MMRYQWWLYLVYAIGLMLCLGPSYIHPDEHFQCIEILAMQFMKVKGTIPWEFKSKFAARSYGPLLLVYGPLFTILESFPEIQDNPALILYSMRLQNYVMYLLCYHFLIPKLIRDERKAVQFIKKSLLLTSYVTWTYQTHTFSNSIETLALISTLTVMEDMVNEKNIQRSNFKNSVILGLIFSFGVFNRVTFPAFIFLPCLILFWKFYRVHWKSFSLLLLSFSFSSCLFVLIDTNIYNNGKGFVITPLNNLKYNLNVQNLQVHGLHPRYTHLLVNLPQIVGPVLLLAIFSGYKLDKLSTYAIISGLLFLSFFQHQELRFLVPLVPLLVTNLNWTPLSSTLVNKKIFKGTWLLFNIIMAFIMGISHQAGIIQFLGDYFHFRTEQMGVHIWWKTYSPPTWMYMSNNLTVSSLINTQDGIESIDEVAFSVGNHHVIDLKGCDLPLLTETIRRLRLNGSITPLTLVTPNSMTSELKKLKRDGTINLIPKRNYLFHLDLDHLDFNDFTTFKPGLTVYSIELL.

Topologically, residues 1-5 (MMRYQ) are lumenal. A helical transmembrane segment spans residues 6–26 (WWLYLVYAIGLMLCLGPSYIH). At 27-60 (PDEHFQCIEILAMQFMKVKGTIPWEFKSKFAARS) the chain is on the cytoplasmic side. A helical membrane pass occupies residues 61–81 (YGPLLLVYGPLFTILESFPEI). Over 82-175 (QDNPALILYS…IQRSNFKNSV (94 aa)) the chain is Lumenal. A helical transmembrane segment spans residues 176–196 (ILGLIFSFGVFNRVTFPAFIF). The Cytoplasmic segment spans residues 197-210 (LPCLILFWKFYRVH). The helical transmembrane segment at 211–231 (WKSFSLLLLSFSFSSCLFVLI) threads the bilayer. At 232–270 (DTNIYNNGKGFVITPLNNLKYNLNVQNLQVHGLHPRYTH) the chain is on the lumenal side. Residues 271–291 (LLVNLPQIVGPVLLLAIFSGY) form a helical membrane-spanning segment. Over 292–295 (KLDK) the chain is Cytoplasmic. The helical transmembrane segment at 296–316 (LSTYAIISGLLFLSFFQHQEL) threads the bilayer. A topological domain (lumenal) is located at residue Arg-317. Residues 318–338 (FLVPLVPLLVTNLNWTPLSST) form a helical membrane-spanning segment. The Cytoplasmic segment spans residues 339–348 (LVNKKIFKGT). A helical membrane pass occupies residues 349–369 (WLLFNIIMAFIMGISHQAGII). Topologically, residues 370–516 (QFLGDYFHFR…GLTVYSIELL (147 aa)) are lumenal. Asn-403 and Asn-452 each carry an N-linked (GlcNAc...) asparagine glycan.

Belongs to the glycosyltransferase 22 family. PIGZ subfamily.

The protein resides in the endoplasmic reticulum membrane. It functions in the pathway glycolipid biosynthesis; glycosylphosphatidylinositol-anchor biosynthesis. Its function is as follows. Alpha-1,2-mannosyltransferase involved in glycosylphosphatidylinositol-anchor biosynthesis. Transfers a fourth mannose to trimannosyl-GPIs during GPI precursor assembly. The presence of a fourth mannose in GPI is essential in fungi. Involved in plasmid maintenance with SMP2. This is GPI mannosyltransferase 4 (SMP3) from Saccharomyces cerevisiae (strain ATCC 204508 / S288c) (Baker's yeast).